The sequence spans 140 residues: Small ribosomal subunit protein uS12 (140 aa).

Position 102 is a 3-methylthioaspartic acid (Asp-102).

The protein belongs to the universal ribosomal protein uS12 family. In terms of assembly, part of the 30S ribosomal subunit. Contacts proteins S8 and S17. May interact with IF1 in the 30S initiation complex.

With S4 and S5 plays an important role in translational accuracy. In terms of biological role, interacts with and stabilizes bases of the 16S rRNA that are involved in tRNA selection in the A site and with the mRNA backbone. Located at the interface of the 30S and 50S subunits, it traverses the body of the 30S subunit contacting proteins on the other side and probably holding the rRNA structure together. The combined cluster of proteins S8, S12 and S17 appears to hold together the shoulder and platform of the 30S subunit. The chain is Small ribosomal subunit protein uS12 from Geobacillus sp. (strain WCH70).